Reading from the N-terminus, the 96-residue chain is Protein RnfH (96 aa).

Belongs to the UPF0125 (RnfH) family.

The chain is Protein RnfH from Salmonella agona (strain SL483).